Here is a 351-residue protein sequence, read N- to C-terminus: Photosystem II D2 protein (351 aa).

Residues 39-59 (TAYLAIGGWLTGTTFVTSWYT) traverse the membrane as a helical segment. A chlorophyll a-binding site is contributed by His-116. Residues 123-139 (GFMLRQFEIARLVGIRP) form a helical membrane-spanning segment. Gln-128 and Asn-141 together coordinate pheophytin a. The chain crosses the membrane as a helical span at residues 151 to 164 (VFVSVFLMYPLGQS). Position 196 (His-196) interacts with chlorophyll a. Residues 206–226 (GALLCAIHGATVENTLFEDGE) traverse the membrane as a helical segment. A plastoquinone contacts are provided by His-213 and Phe-260. Position 213 (His-213) interacts with Fe cation. His-267 serves as a coordination point for Fe cation. A helical membrane pass occupies residues 277-293 (GLWTSSIGIIGLALNLR).

It belongs to the reaction center PufL/M/PsbA/D family. PSII is composed of 1 copy each of membrane proteins PsbA, PsbB, PsbC, PsbD, PsbE, PsbF, PsbH, PsbI, PsbJ, PsbK, PsbL, PsbM, PsbT, PsbX, PsbY, PsbZ, Psb30/Ycf12, peripheral proteins PsbO, CyanoQ (PsbQ), PsbU, PsbV and a large number of cofactors. It forms dimeric complexes. It depends on The D1/D2 heterodimer binds P680, chlorophylls that are the primary electron donor of PSII, and subsequent electron acceptors. It shares a non-heme iron and each subunit binds pheophytin, quinone, additional chlorophylls, carotenoids and lipids. There is also a Cl(-1) ion associated with D1 and D2, which is required for oxygen evolution. The PSII complex binds additional chlorophylls, carotenoids and specific lipids. as a cofactor.

It localises to the cellular thylakoid membrane. It catalyses the reaction 2 a plastoquinone + 4 hnu + 2 H2O = 2 a plastoquinol + O2. Photosystem II (PSII) is a light-driven water:plastoquinone oxidoreductase that uses light energy to abstract electrons from H(2)O, generating O(2) and a proton gradient subsequently used for ATP formation. It consists of a core antenna complex that captures photons, and an electron transfer chain that converts photonic excitation into a charge separation. The D1/D2 (PsbA/PsbD) reaction center heterodimer binds P680, the primary electron donor of PSII as well as several subsequent electron acceptors. D2 is needed for assembly of a stable PSII complex. The polypeptide is Photosystem II D2 protein (Synechococcus sp. (strain WH7803)).